The primary structure comprises 395 residues: Elongation factor Tu (395 aa).

The tr-type G domain occupies 10 to 205; it reads KPHVNIGTIG…AVDSYIPMPE (196 aa). The interval 19–26 is G1; it reads GHIDHGKT. 19–26 lines the GTP pocket; that stretch reads GHIDHGKT. A Mg(2+)-binding site is contributed by threonine 26. A G2 region spans residues 61–65; it reads GITIA. The G3 stretch occupies residues 82-85; that stretch reads DCPG. GTP contacts are provided by residues 82-86 and 137-140; these read DCPGH and NKVD. The G4 stretch occupies residues 137-140; it reads NKVD. The interval 175–177 is G5; the sequence is SAL.

It belongs to the TRAFAC class translation factor GTPase superfamily. Classic translation factor GTPase family. EF-Tu/EF-1A subfamily. In terms of assembly, monomer.

It is found in the cytoplasm. The catalysed reaction is GTP + H2O = GDP + phosphate + H(+). GTP hydrolase that promotes the GTP-dependent binding of aminoacyl-tRNA to the A-site of ribosomes during protein biosynthesis. The protein is Elongation factor Tu of Solibacter usitatus (strain Ellin6076).